Consider the following 149-residue polypeptide: Arginine repressor (149 aa).

The protein belongs to the ArgR family.

Its subcellular location is the cytoplasm. Its pathway is amino-acid biosynthesis; L-arginine biosynthesis [regulation]. Functionally, regulates arginine biosynthesis genes. This is Arginine repressor from Oceanobacillus iheyensis (strain DSM 14371 / CIP 107618 / JCM 11309 / KCTC 3954 / HTE831).